Consider the following 319-residue polypeptide: Thioredoxin reductase (319 aa).

Position 36 to 43 (36 to 43 (TGTNKGGQ)) interacts with FAD. Cysteine 136 and cysteine 139 are disulfide-bonded. An FAD-binding site is contributed by 288–297 (DVIDHVYRQA).

It belongs to the class-II pyridine nucleotide-disulfide oxidoreductase family. As to quaternary structure, homodimer. It depends on FAD as a cofactor.

The protein localises to the cytoplasm. It catalyses the reaction [thioredoxin]-dithiol + NADP(+) = [thioredoxin]-disulfide + NADPH + H(+). This is Thioredoxin reductase (trxB) from Buchnera aphidicola subsp. Acyrthosiphon pisum (strain APS) (Acyrthosiphon pisum symbiotic bacterium).